The following is a 64-amino-acid chain: Conotoxin Pu5.2 (64 aa).

Residues 1-22 form the signal peptide; it reads MRCVPVFVILLLLIASTPSVDA. Residues 23-52 constitute a propeptide that is removed on maturation; that stretch reads RPNPKDDVPLASFHGADNANRILRTLWNLR. The residue at position 63 (I63) is an Isoleucine amide.

It belongs to the conotoxin T superfamily. In terms of processing, contains 2 disulfide bonds that can be either 'C1-C3, C2-C4' or 'C1-C4, C2-C3', since these disulfide connectivities have been observed for conotoxins with cysteine framework V (for examples, see AC P0DQQ7 and AC P81755). As to expression, expressed by the venom duct.

It localises to the secreted. This chain is Conotoxin Pu5.2, found in Conus pulicarius (Flea-bitten cone).